The chain runs to 211 residues: Intermembrane phospholipid transport system binding protein MlaC (211 aa).

The signal sequence occupies residues 1–21 (MFKRLMMVALLVIAPLSAATA).

The protein belongs to the MlaC/ttg2D family. Interacts with the MlaA-OmpF outer membrane complex and with the inner membrane ABC transporter complex MlaFEDB, via direct interaction with MlaD.

The protein resides in the periplasm. Its function is as follows. Involved in a phospholipid transport pathway that maintains lipid asymmetry in the outer membrane by retrograde trafficking of phospholipids from the outer membrane to the inner membrane. May transfer phospholipid across the periplasmic space and deliver it to the MlaFEDB complex at the inner membrane. The protein is Intermembrane phospholipid transport system binding protein MlaC of Escherichia coli (strain K12).